The chain runs to 344 residues: MAKLVLKGNNLSKLIKMSVHREKIDLAKLPHHYDGPVTLAVIGGTGLYDLPNLHPVARLTISTSWGFPSGSITISKTDSGFPVAFLARHGAHHDLLPSDVPSRANIAALKKLGVKAIIAFSAVGSLQQEIKPRDFVLPTQIIDRTKGIRPSTFFEKGFVAHAMFGEPFDLKLNKLISDAIPSKGFLEGFDTDGTPVLHTKENTNNGEDLTIICMEGPQFSTRAESRLYRSWGGSVINMSVLPEAKLAREAEIAYQMICMSTDYDSWNESEEPVTVETVVGNLKANSANACKLAAKLIDEFAAKGGEIGKDLQGSMKYAVSTSPHGVKKELLEKMHFLFPGYWEV.

Phosphate contacts are provided by residues Thr-45, 88 to 89 (RH), and 121 to 122 (SA). Substrate is bound at residue Met-238. Ser-239 contributes to the phosphate binding site. 262 to 264 (DYD) lines the substrate pocket.

It belongs to the PNP/MTAP phosphorylase family. MTAP subfamily. As to quaternary structure, homotrimer.

The protein localises to the cytoplasm. It localises to the nucleus. The catalysed reaction is S-methyl-5'-thioadenosine + phosphate = 5-(methylsulfanyl)-alpha-D-ribose 1-phosphate + adenine. Its pathway is amino-acid biosynthesis; L-methionine biosynthesis via salvage pathway; S-methyl-5-thio-alpha-D-ribose 1-phosphate from S-methyl-5'-thioadenosine (phosphorylase route): step 1/1. Functionally, catalyzes the reversible phosphorylation of S-methyl-5'-thioadenosine (MTA) to adenine and 5-methylthioribose-1-phosphate. Involved in the breakdown of MTA, a major by-product of polyamine biosynthesis. Responsible for the first step in the methionine salvage pathway after MTA has been generated from S-adenosylmethionine. Has broad substrate specificity with 6-aminopurine nucleosides as preferred substrates. The sequence is that of S-methyl-5'-thioadenosine phosphorylase from Candida albicans (strain WO-1) (Yeast).